The chain runs to 234 residues: Probable Ufm1-specific protease 1 (234 aa).

Catalysis depends on residues cysteine 70, aspartate 194, and histidine 196.

It belongs to the peptidase C78 family.

Its function is as follows. Thiol protease which recognizes and hydrolyzes the peptide bond at the C-terminal Gly of UFM1, a ubiquitin-like modifier protein bound to a number of target proteins. This Drosophila melanogaster (Fruit fly) protein is Probable Ufm1-specific protease 1.